The sequence spans 143 residues: Cytochrome c-type biogenesis protein CcmE (143 aa).

Residues 1–8 (MTPVRRRK) lie on the Cytoplasmic side of the membrane. Residues 9–29 (LFILLFALSVLSAAAALVLYA) traverse the membrane as a helical; Signal-anchor for type II membrane protein segment. At 30 to 143 (LRQNISLFYT…KSALADKVKQ (114 aa)) the chain is on the periplasmic side. Heme is bound by residues H124 and Y128.

This sequence belongs to the CcmE/CycJ family.

The protein localises to the cell inner membrane. Its function is as follows. Heme chaperone required for the biogenesis of c-type cytochromes. Transiently binds heme delivered by CcmC and transfers the heme to apo-cytochromes in a process facilitated by CcmF and CcmH. The polypeptide is Cytochrome c-type biogenesis protein CcmE (Legionella pneumophila (strain Lens)).